Consider the following 149-residue polypeptide: Hydrogenase expression/formation protein HupT (149 aa).

Belongs to the HupJ family.

In Azotobacter chroococcum mcd 1, this protein is Hydrogenase expression/formation protein HupT (hupT).